The chain runs to 709 residues: Fatty acid oxidation complex subunit alpha (709 aa).

The enoyl-CoA hydratase stretch occupies residues 1 to 188 (MEKTFNLTRR…KMGLVNDVVP (188 aa)). The tract at residues 308-709 (RKVKKAVILG…AMAAEKARFF (402 aa)) is 3-hydroxyacyl-CoA dehydrogenase.

In the N-terminal section; belongs to the enoyl-CoA hydratase/isomerase family. The protein in the central section; belongs to the 3-hydroxyacyl-CoA dehydrogenase family. As to quaternary structure, heterotetramer of two alpha chains (FadJ) and two beta chains (FadI).

It localises to the cytoplasm. The enzyme catalyses a (3S)-3-hydroxyacyl-CoA = a (2E)-enoyl-CoA + H2O. The catalysed reaction is a 4-saturated-(3S)-3-hydroxyacyl-CoA = a (3E)-enoyl-CoA + H2O. It carries out the reaction a (3S)-3-hydroxyacyl-CoA + NAD(+) = a 3-oxoacyl-CoA + NADH + H(+). It catalyses the reaction (3S)-3-hydroxybutanoyl-CoA = (3R)-3-hydroxybutanoyl-CoA. The protein operates within lipid metabolism; fatty acid beta-oxidation. Functionally, catalyzes the formation of a hydroxyacyl-CoA by addition of water on enoyl-CoA. Also exhibits 3-hydroxyacyl-CoA epimerase and 3-hydroxyacyl-CoA dehydrogenase activities. The sequence is that of Fatty acid oxidation complex subunit alpha from Shewanella sp. (strain ANA-3).